Reading from the N-terminus, the 602-residue chain is DNA mismatch repair protein MutL (602 aa).

The protein belongs to the DNA mismatch repair MutL/HexB family.

Its function is as follows. This protein is involved in the repair of mismatches in DNA. It is required for dam-dependent methyl-directed DNA mismatch repair. May act as a 'molecular matchmaker', a protein that promotes the formation of a stable complex between two or more DNA-binding proteins in an ATP-dependent manner without itself being part of a final effector complex. The protein is DNA mismatch repair protein MutL of Baumannia cicadellinicola subsp. Homalodisca coagulata.